A 297-amino-acid chain; its full sequence is tRNA pseudouridine synthase B (297 aa).

Aspartate 44 serves as the catalytic Nucleophile.

This sequence belongs to the pseudouridine synthase TruB family. Type 1 subfamily.

It catalyses the reaction uridine(55) in tRNA = pseudouridine(55) in tRNA. Responsible for synthesis of pseudouridine from uracil-55 in the psi GC loop of transfer RNAs. In Corynebacterium efficiens (strain DSM 44549 / YS-314 / AJ 12310 / JCM 11189 / NBRC 100395), this protein is tRNA pseudouridine synthase B.